Here is a 308-residue protein sequence, read N- to C-terminus: Regulating synaptic membrane exocytosis protein 3 (308 aa).

The interval 86–120 is disordered; the sequence is STETGIAVEMRSRVTRQGSRESTDGSTNSNSSDGT. Residues 109–120 are compositionally biased toward low complexity; the sequence is DGSTNSNSSDGT. One can recognise a C2 domain in the interval 156 to 274; sequence PMGDVHIAIM…DLSAAVTGWY (119 aa). 2 positions are modified to phosphoserine: Ser295 and Ser298.

In terms of assembly, binds PPFIA3. Does not bind RAB3.

Its subcellular location is the synapse. Functionally, regulates synaptic membrane exocytosis. The chain is Regulating synaptic membrane exocytosis protein 3 (RIMS3) from Homo sapiens (Human).